A 199-amino-acid polypeptide reads, in one-letter code: LexA repressor (199 aa).

Positions 28 to 47 (IRDIAKHFKLTPRGAHIHVI) form a DNA-binding region, H-T-H motif. Active-site for autocatalytic cleavage activity residues include serine 120 and lysine 157.

This sequence belongs to the peptidase S24 family. In terms of assembly, homodimer.

It carries out the reaction Hydrolysis of Ala-|-Gly bond in repressor LexA.. In terms of biological role, represses a number of genes involved in the response to DNA damage (SOS response), including recA and lexA. In the presence of single-stranded DNA, RecA interacts with LexA causing an autocatalytic cleavage which disrupts the DNA-binding part of LexA, leading to derepression of the SOS regulon and eventually DNA repair. The sequence is that of LexA repressor from Thermosipho melanesiensis (strain DSM 12029 / CIP 104789 / BI429).